Reading from the N-terminus, the 459-residue chain is Trigger factor (459 aa).

One can recognise a PPIase FKBP-type domain in the interval 166 to 245 (GDFANIDLTA…VNSVKAEELP (80 aa)).

Belongs to the FKBP-type PPIase family. Tig subfamily.

It is found in the cytoplasm. It catalyses the reaction [protein]-peptidylproline (omega=180) = [protein]-peptidylproline (omega=0). Functionally, involved in protein export. Acts as a chaperone by maintaining the newly synthesized protein in an open conformation. Functions as a peptidyl-prolyl cis-trans isomerase. The protein is Trigger factor of Bifidobacterium longum (strain NCC 2705).